The following is a 343-amino-acid chain: Ornithine carbamoyltransferase, catabolic (343 aa).

62–65 lines the carbamoyl phosphate pocket; it reads STRT. H79 is a Ni(2+) binding site. Carbamoyl phosphate is bound by residues Q89, R113, and 140-143; that span reads HPTQ. L-ornithine-binding positions include N172, D236, and 240–241; that span reads SM. Carbamoyl phosphate is bound by residues 278-279 and R323; that span reads CL.

It belongs to the aspartate/ornithine carbamoyltransferase superfamily. OTCase family. Homohexamer; dimer of trimers. It depends on Ni(2+) as a cofactor.

It localises to the cytoplasm. The enzyme catalyses carbamoyl phosphate + L-ornithine = L-citrulline + phosphate + H(+). The protein operates within amino-acid degradation; L-arginine degradation via ADI pathway; carbamoyl phosphate from L-arginine: step 2/2. Involved in the catabolism of arginine. Catalyzes the phosphorolysis of citrulline, the reverse reaction of the biosynthetic one, yielding ornithine and carbamoyl phosphate which serve to generate ATP from ADP. This is Ornithine carbamoyltransferase, catabolic from Lentilactobacillus hilgardii (Lactobacillus hilgardii).